Here is a 312-residue protein sequence, read N- to C-terminus: GATA transcription factor 6 (312 aa).

Disordered stretches follow at residues 1-33 (MESV…VDDL), 56-77 (QRKR…STAD), and 136-186 (KSQH…PLWL). Positions 56-71 (QRKRGVSDENTLHRSN) are enriched in basic and acidic residues. Basic residues predominate over residues 142–151 (VKTRPKRART). Positions 143-150 (KTRPKRAR) match the Nuclear localization signal motif. Over residues 157–186 (SHGSQSLTDSSSSSTTSSSSSPRPSSPLWL) the composition is skewed to low complexity. The segment at 217–271 (QTQTRQCGHCGVQKTPQWRAGPLGAKTLCNACGVRYKSGRLLPEYRPACSPTFSS) adopts a GATA-type zinc-finger fold.

This sequence belongs to the type IV zinc-finger family. Class A subfamily.

The protein resides in the nucleus. Its function is as follows. Transcriptional activator that specifically binds 5'-GATA-3' or 5'-GAT-3' motifs within gene promoters. May be involved in the regulation of some light-responsive genes. The protein is GATA transcription factor 6 (GATA6) of Arabidopsis thaliana (Mouse-ear cress).